A 156-amino-acid polypeptide reads, in one-letter code: Small ribosomal subunit protein uS7 (156 aa).

It belongs to the universal ribosomal protein uS7 family. As to quaternary structure, part of the 30S ribosomal subunit. Contacts proteins S9 and S11.

Its function is as follows. One of the primary rRNA binding proteins, it binds directly to 16S rRNA where it nucleates assembly of the head domain of the 30S subunit. Is located at the subunit interface close to the decoding center, probably blocks exit of the E-site tRNA. In Rhizobium johnstonii (strain DSM 114642 / LMG 32736 / 3841) (Rhizobium leguminosarum bv. viciae), this protein is Small ribosomal subunit protein uS7.